We begin with the raw amino-acid sequence, 603 residues long: ABC transporter E family member 1 (603 aa).

4Fe-4S ferredoxin-type domains follow at residues 7-39 and 46-75; these read RIAI…KLCI and KSAF…IINL. ABC transporter domains follow at residues 70 to 315 and 344 to 566; these read IQII…FLAG and VKSY…LSHL. ATP-binding positions include 110-117 and 381-388; these read GTNGIGKS and GENGTGKT.

Belongs to the ABC transporter superfamily. ABCE family. As to expression, expressed in roots, stems, leaves, flowers and siliques.

The protein localises to the membrane. This chain is ABC transporter E family member 1 (ABCE1), found in Arabidopsis thaliana (Mouse-ear cress).